Here is a 176-residue protein sequence, read N- to C-terminus: Transmembrane protein 238 (176 aa).

The disordered stretch occupies residues M1–A22. The Cytoplasmic portion of the chain corresponds to M1–M36. Positions A9–A22 are enriched in low complexity. The helical transmembrane segment at A37 to F57 threads the bilayer. Residues A58–D69 lie on the Extracellular side of the membrane. The chain crosses the membrane as a helical span at residues L70 to Y90. The Cytoplasmic segment spans residues T91–E176. Low complexity predominate over residues S124–S137. The interval S124–V157 is disordered. S175 carries the post-translational modification Phosphoserine.

Its subcellular location is the membrane. The chain is Transmembrane protein 238 (TMEM238) from Homo sapiens (Human).